The chain runs to 206 residues: MCDQLAFASQRKPYQHMDLRHHVRDIPDYPKPGILFRDITPLLAHPEALTASVEEMAKPFLDQKIDVVAAAEARGFIFGTPLAMRLNAGFVPIRKPGKLPFDLHSFAYELEYGSDELQIHVDGIKPGQRVLIVDDLLATGGTVEACLRLLEKCDAEIVGCSFLIHLVALGGEARLSPYHVHSVLEYGGDDAEDELSIQNRPPGPSV.

Belongs to the purine/pyrimidine phosphoribosyltransferase family. As to quaternary structure, homodimer.

Its subcellular location is the cytoplasm. The catalysed reaction is AMP + diphosphate = 5-phospho-alpha-D-ribose 1-diphosphate + adenine. It participates in purine metabolism; AMP biosynthesis via salvage pathway; AMP from adenine: step 1/1. Its function is as follows. Catalyzes a salvage reaction resulting in the formation of AMP, that is energically less costly than de novo synthesis. The polypeptide is Adenine phosphoribosyltransferase (Rhodopirellula baltica (strain DSM 10527 / NCIMB 13988 / SH1)).